An 821-amino-acid polypeptide reads, in one-letter code: Kinetochore protein SLK19 (821 aa).

2 disordered regions span residues 1-52 and 99-153; these read MNEV…SQFV and FDDK…NDKE. Thr7 carries the phosphothreonine; by CDC28 modification. A compositionally biased stretch (polar residues) spans 15 to 51; sequence QAQQREQNSENCSQERNPRTFNSEPDSSFNSPGSSQF. 2 stretches are compositionally biased toward basic and acidic residues: residues 99–122 and 136–153; these read FDDK…DKHV and SSEK…NDKE. Residues Ser188 and Ser189 each carry the phosphoserine modification. A Phosphoserine; by CDC28 modification is found at Ser201. At Ser216 the chain carries Phosphoserine. Thr273 carries the phosphothreonine modification. Disordered stretches follow at residues 274 to 298 and 699 to 720; these read PLYE…DDNQ and EQNN…RDDE. Residue Ser283 is modified to Phosphoserine. Positions 310 to 821 form a coiled coil; that stretch reads AKRNEELTDQ…LLKLLENEKK (512 aa).

Cleaved by ESP1 at the onset of anaphase. In terms of processing, phosphorylated by CDC5/Polo-like kinase at the onset of anaphase. Phosphorylation takes places at proximity to cleavage sites and is required for an efficient cleavage by ESP1. Phosphorylated also by CDC28.

The protein resides in the chromosome. The protein localises to the centromere. Its subcellular location is the kinetochore. It localises to the cytoplasm. It is found in the cytoskeleton. The protein resides in the microtubule organizing center. The protein localises to the spindle pole body. In terms of biological role, has a role in spindle assembly and stability. Required to ensure a timely exit form mitosis. Essential to maintain pre-anaphase spindle polarity. Associates to the plus ends of the microtubules at the kinetochore and spindle midzone. A component of the FEAR (CDC14 Early Anaphase Release) network which promotes CDC14 release from the nucleolus during early anaphase. Required for proper chromosome segregation during meiosis I where it prevents premature sister chromatid separation. The sequence is that of Kinetochore protein SLK19 (SLK19) from Saccharomyces cerevisiae (strain ATCC 204508 / S288c) (Baker's yeast).